The sequence spans 729 residues: Fatty acid oxidation complex subunit alpha (729 aa).

Positions 1 to 189 (MLYQGESLYL…KVGLVQAVVA (189 aa)) are enoyl-CoA hydratase/isomerase. Substrate is bound at residue Asp296. The tract at residues 311-729 (PVPQQAAVLG…HADVSHGQPA (419 aa)) is 3-hydroxyacyl-CoA dehydrogenase. Residues Met324, Asp343, 400 to 402 (VVE), Lys407, and Ser429 each bind NAD(+). His450 serves as the catalytic For 3-hydroxyacyl-CoA dehydrogenase activity. Asn453 provides a ligand contact to NAD(+). Substrate is bound by residues Asn500 and Tyr660.

In the N-terminal section; belongs to the enoyl-CoA hydratase/isomerase family. The protein in the C-terminal section; belongs to the 3-hydroxyacyl-CoA dehydrogenase family. In terms of assembly, heterotetramer of two alpha chains (FadB) and two beta chains (FadA).

The catalysed reaction is a (3S)-3-hydroxyacyl-CoA + NAD(+) = a 3-oxoacyl-CoA + NADH + H(+). It carries out the reaction a (3S)-3-hydroxyacyl-CoA = a (2E)-enoyl-CoA + H2O. It catalyses the reaction a 4-saturated-(3S)-3-hydroxyacyl-CoA = a (3E)-enoyl-CoA + H2O. The enzyme catalyses (3S)-3-hydroxybutanoyl-CoA = (3R)-3-hydroxybutanoyl-CoA. The catalysed reaction is a (3Z)-enoyl-CoA = a 4-saturated (2E)-enoyl-CoA. It carries out the reaction a (3E)-enoyl-CoA = a 4-saturated (2E)-enoyl-CoA. Its pathway is lipid metabolism; fatty acid beta-oxidation. Functionally, involved in the aerobic and anaerobic degradation of long-chain fatty acids via beta-oxidation cycle. Catalyzes the formation of 3-oxoacyl-CoA from enoyl-CoA via L-3-hydroxyacyl-CoA. It can also use D-3-hydroxyacyl-CoA and cis-3-enoyl-CoA as substrate. This is Fatty acid oxidation complex subunit alpha from Pectobacterium atrosepticum (strain SCRI 1043 / ATCC BAA-672) (Erwinia carotovora subsp. atroseptica).